Here is a 240-residue protein sequence, read N- to C-terminus: Uridylate kinase (240 aa).

13 to 16 contacts ATP; that stretch reads KASG. Residues 21–26 form an involved in allosteric activation by GTP region; that stretch reads GSQGFG. G55 contributes to the UMP binding site. ATP contacts are provided by G56 and R60. UMP-binding positions include D75 and 136–143; that span reads TGNPFFTT. Residues T163, Q164, Y169, and D172 each contribute to the ATP site.

The protein belongs to the UMP kinase family. In terms of assembly, homohexamer.

The protein localises to the cytoplasm. It carries out the reaction UMP + ATP = UDP + ADP. The protein operates within pyrimidine metabolism; CTP biosynthesis via de novo pathway; UDP from UMP (UMPK route): step 1/1. Allosterically activated by GTP. Inhibited by UTP. In terms of biological role, catalyzes the reversible phosphorylation of UMP to UDP. The chain is Uridylate kinase from Brucella abortus biovar 1 (strain 9-941).